Reading from the N-terminus, the 563-residue chain is Envelope glycoprotein (563 aa).

The N-terminal stretch at 1-18 is a signal peptide; sequence MGFTTKIIFLYNLVLVYA. The Extracellular segment spans residues 19 to 503; it reads GFDDPRKAIE…SNPLWTGLQG (485 aa). N-linked (GlcNAc...) asparagine; by host glycans are attached at residues N113, N219, and N229. A CXXC motif is present at residues 236 to 239; the sequence is CWLC. Cystine bridges form between C236-C239, C236-C465, and C457-C464. Residues N264, N282, N292, N306, N312, N321, and N339 are each glycosylated (N-linked (GlcNAc...) asparagine; by host). A fusion peptide region spans residues 380-400; that stretch reads FIPLLAGLGITAAFTTGATGL. Coiled coils occupy residues 401-451 and 461-497; these read GVSV…LLTA and QEKCCFYVNKSGIVRDKIKTLQEELERRRKDLASNPL. An immunosuppression region spans residues 440–456; that stretch reads LQNRRGLDLLTAEQGGI. A CX6CC motif is present at residues 457–465; sequence CLALQEKCC. N-linked (GlcNAc...) asparagine; by host glycosylation is present at N469. A helical transmembrane segment spans residues 504–524; it reads LLPYLLPFLGPLLTLLLLLTI. Topologically, residues 525–563 are cytoplasmic; it reads GPCIFNRLTAFINDKLNIIHAMVLTQQYQVLRTDEEAQD. C527 carries the S-palmitoyl cysteine; by host lipid modification. Residues 552 to 555 carry the YXXL motif; contains endocytosis signal motif; that stretch reads YQVL.

In terms of assembly, the mature envelope protein (Env) consists of a trimer of SU-TM heterodimers attached by a labile interchain disulfide bond. In terms of processing, specific enzymatic cleavages in vivo yield mature proteins. Envelope glycoproteins are synthesized as an inactive precursor that is N-glycosylated and processed likely by host cell furin or by a furin-like protease in the Golgi to yield the mature SU and TM proteins. The cleavage site between SU and TM requires the minimal sequence [KR]-X-[KR]-R. The R-peptide is released from the C-terminus of the cytoplasmic tail of the TM protein upon particle formation as a result of proteolytic cleavage by the viral protease. Cleavage of this peptide is required for TM to become fusogenic. Post-translationally, the CXXC motif is highly conserved across a broad range of retroviral envelope proteins. It is thought to participate in the formation of a labile disulfide bond possibly with the CX6CC motif present in the transmembrane protein. Isomerization of the intersubunit disulfide bond to an SU intrachain disulfide bond is thought to occur upon receptor recognition in order to allow membrane fusion. The transmembrane protein is palmitoylated.

It localises to the virion membrane. The protein resides in the host cell membrane. The surface protein (SU) attaches the virus to the host cell by binding to its receptor. This interaction triggers the refolding of the transmembrane protein (TM) and is thought to activate its fusogenic potential by unmasking its fusion peptide. Fusion occurs at the host cell plasma membrane. In terms of biological role, the transmembrane protein (TM) acts as a class I viral fusion protein. Under the current model, the protein has at least 3 conformational states: pre-fusion native state, pre-hairpin intermediate state, and post-fusion hairpin state. During viral and target cell membrane fusion, the coiled coil regions (heptad repeats) assume a trimer-of-hairpins structure, positioning the fusion peptide in close proximity to the C-terminal region of the ectodomain. The formation of this structure appears to drive apposition and subsequent fusion of viral and target cell membranes. Membranes fusion leads to delivery of the nucleocapsid into the cytoplasm. The sequence is that of Envelope glycoprotein (env) from Baboon endogenous virus (strain M7).